The following is a 382-amino-acid chain: Non-structural maintenance of chromosomes element 4 homolog A (382 aa).

A compositionally biased stretch (basic and acidic residues) spans 1–21 (MSGDSSGRRPEGRGRGRDPHR). Residues 1–80 (MSGDSSGRRP…ASLEEETDPS (80 aa)) form a disordered region. Residues 31 to 41 (RSPLSPGSRRG) are compositionally biased toward low complexity. The span at 42–55 (AAPERREAPERPGL) shows a compositional bias: basic and acidic residues. Residues 56–78 (EDTEPSDSGDEMIDPASLEEETD) show a composition bias toward acidic residues. Threonine 342 carries the phosphothreonine modification. Serine 374 carries the post-translational modification Phosphoserine.

Belongs to the NSE4 family. In terms of assembly, component of the SMC5-SMC6 complex which consists at least of SMC5, SMC6, NSMCE2, NSMCE1, NSMCE4A or EID3 and NSMCE3. NSMCE1, NSMCE4A or EID3 and NSMCE3 probably form a subcomplex that bridges the head domains of the SMC5:SMC6 heterodimer. Interacts with NSMCE3.

It is found in the nucleus. The protein resides in the chromosome. Its subcellular location is the telomere. Component of the SMC5-SMC6 complex, a complex involved in repair of DNA double-strand breaks by homologous recombination. The complex may promote sister chromatid homologous recombination by recruiting the SMC1-SMC3 cohesin complex to double-strand breaks. The complex is required for telomere maintenance via recombination and mediates sumoylation of shelterin complex (telosome) components. This Bos taurus (Bovine) protein is Non-structural maintenance of chromosomes element 4 homolog A (NSMCE4A).